Consider the following 1370-residue polypeptide: MAYSFTERKRIRKSFGTRDSVLEVPYLLQMQKDAYTAFLQADKEPRKRTIEGLQAAFDAAFPIVSHNGFVEMKFIEYNLARPAFDVRECQTRGLTFASAVRAKVQLIIYDRESSTSQSKVVKEVKEQEVYMGEVPLMTDKGSFIINGTERVIVSQLHRSPGVFFEHDKGKTHGSGKLLFSARIIPYRGSWLDFEFDPKDILYFRVDRRRKMPVTILLKAIGLNPESILANFFVNDNFRLMDSGAQMEFVPERLRGEVARFDITDKSGKLIVAKDKRVTARHTRDLEQSGSTHISVPEDFLVGRVVARTIVDADSGEILAKANDELTEALLKKLRSAAVRELQCIYTNELDQGAYISHTLRSDETVDEFAARVAIYRMMRPGEPPTEDAVQALFQRLFYNPDTYDLSRVGRMKFNARIGRDESTGPMVLSNEDILAVVKILVDLRNGNGEVDDIDHLGNRRVRCVGELAENQYRTGLARIEKAVKERLGQAEQEPLMPHDLINSKPISAALKEFFGASQLSQFMDQTNPLAEITHKRRVSALGPGGLTRERAGFEVRDVHVTHYGRVCPIETPEGPNIGLINSLALYARLNEYGFIETPYRRVVGGMVTNDIDYLSAIEEGKYVIAQANAVLDKEGRLTGDLVSAREKGESILCAADRVRYMDVSPAQIVSVAASLVPFLEHDDANRALMGANMSRQAVPVLRPEKPLVGTGIERVAAIDSGTVVTATRGGSVDYVDATRIVVRVNDDETVAGEVGVDIYNLIKYQRSNQNTNIHQRPIVKKGDRLVKGDVIADGASTDLGEIAIGQNMLIAFMPWNGYNFEDSILISERVVSEDRYTSIHIEELVVMARDTKLGAEEITRDIPNLSEQQLNRLDESGIIYVGAEVQPGDTLVGKVTPKGETTLTPEEKLLRAIFGEKASDVKDTSLRVEQGSQGTVIDVQVFTREGIARDKRAQQIIDDELKRFRLDLNDQLRIVEADAFERIEKLLLGRVANGGPHKLLKGAKIDKPYLSSVEKFHWFDIRPAQDEVAAQLELIKDALEQTRHSFDLAFEEKKKKLTQGDELPAGVLKMVKVYLAVKRRLQPGDKMAGRHGNKGVVSKIVPVEDMPYMADGTPADIVLNPLGVPSRMNIGQVLEVHLGWASKGIGQRIGDMLQQQAKAAELRKFLDKVYNARGRTEDLAQLCDEELVAMAAHLRHGMPYATPVFDGASEEEIKDMLKIAYPDEIAQRKGLTATRTQAFLYDGRTGERFERPTTIGYMHYLKLHHLVDDKMHARSTGPYSLVTQQPLGGKAQFGGQRFGEMEVWALEAYGAAYVLQEMLTVKSDDVAGRTKVYESIVKGEHAIEAGMPESFNVLVKEIRSLGLDIELERS.

This sequence belongs to the RNA polymerase beta chain family. In terms of assembly, the RNAP catalytic core consists of 2 alpha, 1 beta, 1 beta' and 1 omega subunit. When a sigma factor is associated with the core the holoenzyme is formed, which can initiate transcription.

The catalysed reaction is RNA(n) + a ribonucleoside 5'-triphosphate = RNA(n+1) + diphosphate. In terms of biological role, DNA-dependent RNA polymerase catalyzes the transcription of DNA into RNA using the four ribonucleoside triphosphates as substrates. This chain is DNA-directed RNA polymerase subunit beta, found in Verminephrobacter eiseniae (strain EF01-2).